We begin with the raw amino-acid sequence, 228 residues long: Cytidylate kinase (228 aa).

17-25 (GPTASGKGT) lines the ATP pocket.

It belongs to the cytidylate kinase family. Type 1 subfamily.

The protein resides in the cytoplasm. It carries out the reaction CMP + ATP = CDP + ADP. It catalyses the reaction dCMP + ATP = dCDP + ADP. This chain is Cytidylate kinase, found in Burkholderia pseudomallei (strain 1106a).